The sequence spans 469 residues: NADH-quinone oxidoreductase subunit N (469 aa).

Transmembrane regions (helical) follow at residues 6-26 (IWII…LLLG), 37-57 (VGVA…PAAL), 61-81 (LGVA…LTAA), 96-116 (ISGE…AVVS), 121-141 (LLIL…LVAI), 156-176 (LLLG…LYAA), 197-217 (PIAL…ISLV), 234-254 (VVAF…LLLL), 263-283 (LHTP…LAAL), 291-311 (MLAY…LTGS), 315-335 (FAAV…AFGA), 362-382 (AGIL…AGFI), 397-419 (IPLA…RVVV), and 441-461 (IALS…SPLL).

It belongs to the complex I subunit 2 family. As to quaternary structure, NDH-1 is composed of 14 different subunits. Subunits NuoA, H, J, K, L, M, N constitute the membrane sector of the complex.

The protein localises to the cell inner membrane. The enzyme catalyses a quinone + NADH + 5 H(+)(in) = a quinol + NAD(+) + 4 H(+)(out). NDH-1 shuttles electrons from NADH, via FMN and iron-sulfur (Fe-S) centers, to quinones in the respiratory chain. The immediate electron acceptor for the enzyme in this species is believed to be ubiquinone. Couples the redox reaction to proton translocation (for every two electrons transferred, four hydrogen ions are translocated across the cytoplasmic membrane), and thus conserves the redox energy in a proton gradient. The protein is NADH-quinone oxidoreductase subunit N of Geotalea uraniireducens (strain Rf4) (Geobacter uraniireducens).